Consider the following 371-residue polypeptide: 4-hydroxy-3-methylbut-2-en-1-yl diphosphate synthase (flavodoxin) (371 aa).

Residues Cys268, Cys271, Cys303, and Glu310 each coordinate [4Fe-4S] cluster.

It belongs to the IspG family. [4Fe-4S] cluster serves as cofactor.

It carries out the reaction (2E)-4-hydroxy-3-methylbut-2-enyl diphosphate + oxidized [flavodoxin] + H2O + 2 H(+) = 2-C-methyl-D-erythritol 2,4-cyclic diphosphate + reduced [flavodoxin]. It functions in the pathway isoprenoid biosynthesis; isopentenyl diphosphate biosynthesis via DXP pathway; isopentenyl diphosphate from 1-deoxy-D-xylulose 5-phosphate: step 5/6. Its function is as follows. Converts 2C-methyl-D-erythritol 2,4-cyclodiphosphate (ME-2,4cPP) into 1-hydroxy-2-methyl-2-(E)-butenyl 4-diphosphate. This Lysinibacillus sphaericus (strain C3-41) protein is 4-hydroxy-3-methylbut-2-en-1-yl diphosphate synthase (flavodoxin).